We begin with the raw amino-acid sequence, 155 residues long: MSRRGTAEEKTAKSDPIYRNRLVNMLVNRILKHGKKSLAYQIIYRAMKKIQQKTETNPLSVLRQAIRGVTPDIAVKARRVGGSTHQVPIEIGSTQGKALAIRWLLGASRKRPGRNMVFKLSSELVDAAKGSGDAIRKKEETHRMAEANRAFAHFR.

Belongs to the universal ribosomal protein uS7 family. As to quaternary structure, part of the 30S ribosomal subunit.

The protein resides in the plastid. It localises to the chloroplast. In terms of biological role, one of the primary rRNA binding proteins, it binds directly to 16S rRNA where it nucleates assembly of the head domain of the 30S subunit. The protein is Small ribosomal subunit protein uS7cz/uS7cy (rps7-A) of Morus indica (Mulberry).